The sequence spans 388 residues: Putative C-&gt;U-editing enzyme APOBEC-4 (388 aa).

Residues 60–176 form the CMP/dCMP-type deaminase domain; sequence PQTKHLTFYE…AWNREALRGL (117 aa). His-92 provides a ligand contact to Zn(2+). Glu-94 (proton donor) is an active-site residue. Zn(2+)-binding residues include Cys-126 and Cys-133. The tract at residues 322–356 is disordered; it reads KVKALRKSPSGRPVKKEEARKGSTRSQEANETNKS.

It belongs to the cytidine and deoxycytidylate deaminase family. The cofactor is Zn(2+).

Putative C to U editing enzyme whose physiological substrate is not yet known. The chain is Putative C-&gt;U-editing enzyme APOBEC-4 (Apobec4) from Rattus norvegicus (Rat).